Here is a 782-residue protein sequence, read N- to C-terminus: Endonuclease MutS2 (782 aa).

Residue 336-343 (GPNTGGKT) coordinates ATP. Positions 707 to 782 (LDLRGYRYED…GFGVTVATLK (76 aa)) constitute a Smr domain.

Belongs to the DNA mismatch repair MutS family. MutS2 subfamily. Homodimer. Binds to stalled ribosomes, contacting rRNA.

Functionally, endonuclease that is involved in the suppression of homologous recombination and thus may have a key role in the control of bacterial genetic diversity. In terms of biological role, acts as a ribosome collision sensor, splitting the ribosome into its 2 subunits. Detects stalled/collided 70S ribosomes which it binds and splits by an ATP-hydrolysis driven conformational change. Acts upstream of the ribosome quality control system (RQC), a ribosome-associated complex that mediates the extraction of incompletely synthesized nascent chains from stalled ribosomes and their subsequent degradation. Probably generates substrates for RQC. The chain is Endonuclease MutS2 from Staphylococcus aureus (strain MSSA476).